A 418-amino-acid chain; its full sequence is Voltage-gated ClC-type chloride channel ClcB (418 aa).

Helical transmembrane passes span 5–25, 54–74, 146–166, 168–188, 222–242, 258–278, 291–311, 316–336, 352–372, and 380–400; these read LLIA…FRHA, LLTP…WQKF, LWIA…PLAG, LFIA…PVII, ALII…LTLM, WQLA…PAVW, APPL…AVLA, GAPG…GMLY, LLLG…APIM, and MTGE…ASVI.

Belongs to the chloride channel (TC 2.A.49) family. ClcB subfamily.

Its subcellular location is the cell inner membrane. Functionally, probably acts as an electrical shunt for an outwardly-directed proton pump that is linked to amino acid decarboxylation, as part of the extreme acid resistance (XAR) response. The polypeptide is Voltage-gated ClC-type chloride channel ClcB (Escherichia coli O17:K52:H18 (strain UMN026 / ExPEC)).